The following is a 140-amino-acid chain: uncharacterized protein (140 aa).

This is an uncharacterized protein from Spirochaeta aurantia.